A 253-amino-acid polypeptide reads, in one-letter code: 5-oxoprolinase subunit A (253 aa).

It belongs to the LamB/PxpA family. As to quaternary structure, forms a complex composed of PxpA, PxpB and PxpC.

The enzyme catalyses 5-oxo-L-proline + ATP + 2 H2O = L-glutamate + ADP + phosphate + H(+). Its function is as follows. Catalyzes the cleavage of 5-oxoproline to form L-glutamate coupled to the hydrolysis of ATP to ADP and inorganic phosphate. In Bacillus cereus (strain ATCC 10987 / NRS 248), this protein is 5-oxoprolinase subunit A.